Consider the following 1141-residue polypeptide: DNA-directed RNA polymerase subunit beta (1141 aa).

It belongs to the RNA polymerase beta chain family. The RNAP catalytic core consists of 2 alpha, 1 beta, 1 beta' and 1 omega subunit. When a sigma factor is associated with the core the holoenzyme is formed, which can initiate transcription.

The catalysed reaction is RNA(n) + a ribonucleoside 5'-triphosphate = RNA(n+1) + diphosphate. In terms of biological role, DNA-dependent RNA polymerase catalyzes the transcription of DNA into RNA using the four ribonucleoside triphosphates as substrates. The chain is DNA-directed RNA polymerase subunit beta from Frankia alni (strain DSM 45986 / CECT 9034 / ACN14a).